Here is a 164-residue protein sequence, read N- to C-terminus: MKSVITTTISAADAAGRFPSSSDLESVQGNIQRAAARLEAAEKLASNHEAVVKEAGDACFAKYSYLKNPGEAGDSQEKVNKCYRDVDHYMRLVNYCLVVGGTGPVDEWGIAGAREVYRTLNLPTSAYVASFAFARDRLCVPRDMSAQAGVEYAGNLDYLINALC.

Residues cysteine 82 and cysteine 139 each coordinate (2R,3E)-phycoerythrobilin.

The protein belongs to the phycobiliprotein family. Heterodimer of an alpha and a beta chain. Contains two covalently linked bilin chromophores.

Its subcellular location is the plastid. The protein resides in the chloroplast thylakoid membrane. Light-harvesting photosynthetic bile pigment-protein from the phycobiliprotein complex. The protein is R-phycoerythrin alpha chain (cpeA) of Pyropia haitanensis (Red seaweed).